Consider the following 453-residue polypeptide: Chromosomal replication initiator protein DnaA (453 aa).

The tract at residues 1 to 79 (MKSLIQEKWN…KTAIAEVINQ (79 aa)) is domain I, interacts with DnaA modulators. A domain II region spans residues 79 to 111 (QDFEIEFVLLSQTKAEEKVQTQAPNKIKNESLS). The domain III, AAA+ region stretch occupies residues 112–330 (YLNPRYTFDT…GALTKIVALS (219 aa)). The ATP site is built by G156, G158, K159, and T160. A domain IV, binds dsDNA region spans residues 331-453 (RLKKKEVDVI…VLIKKINPTP (123 aa)).

Belongs to the DnaA family. As to quaternary structure, oligomerizes as a right-handed, spiral filament on DNA at oriC.

Its subcellular location is the cytoplasm. Its function is as follows. Plays an essential role in the initiation and regulation of chromosomal replication. ATP-DnaA binds to the origin of replication (oriC) to initiate formation of the DNA replication initiation complex once per cell cycle. Binds the DnaA box (a 9 base pair repeat at the origin) and separates the double-stranded (ds)DNA. Forms a right-handed helical filament on oriC DNA; dsDNA binds to the exterior of the filament while single-stranded (ss)DNA is stabiized in the filament's interior. The ATP-DnaA-oriC complex binds and stabilizes one strand of the AT-rich DNA unwinding element (DUE), permitting loading of DNA polymerase. After initiation quickly degrades to an ADP-DnaA complex that is not apt for DNA replication. Binds acidic phospholipids. The chain is Chromosomal replication initiator protein DnaA from Lachnoclostridium phytofermentans (strain ATCC 700394 / DSM 18823 / ISDg) (Clostridium phytofermentans).